The primary structure comprises 365 residues: 1-aminocyclopropane-1-carboxylate oxidase homolog 1 (365 aa).

Positions 212–313 constitute a Fe2OG dioxygenase domain; sequence CTNSLLLLGH…RISVACFFSS (102 aa). H238, D240, and H294 together coordinate Fe cation.

Belongs to the iron/ascorbate-dependent oxidoreductase family. Fe cation serves as cofactor.

This Arabidopsis thaliana (Mouse-ear cress) protein is 1-aminocyclopropane-1-carboxylate oxidase homolog 1.